Here is a 444-residue protein sequence, read N- to C-terminus: Trigger factor (444 aa).

The PPIase FKBP-type domain maps to 185–270 (GDKLIIDFEG…VNEIQIAKDF (86 aa)).

The protein belongs to the FKBP-type PPIase family. Tig subfamily.

It is found in the cytoplasm. It carries out the reaction [protein]-peptidylproline (omega=180) = [protein]-peptidylproline (omega=0). Involved in protein export. Acts as a chaperone by maintaining the newly synthesized protein in an open conformation. Functions as a peptidyl-prolyl cis-trans isomerase. The polypeptide is Trigger factor (Wolbachia pipientis wMel).